The sequence spans 1378 residues: MTNCEKDEEFVCISCVEEVRYSFVSHLSEALRRKGINNVVVDVDIDDLLFKESQAKIEKAGVSVMVLPGNCDPSEVWLDKFAKVLECQRNNKDQAVVSVLYGDSLLRDQWLSELDFRGLSRIHQSRKECSDSILVEEIVRDVYETHFYVGRIGIYSKLLEIENMVNKQPIGIRCVGIWGMPGIGKTTLAKAVFDQMSSAFDASCFIEDYDKSIHEKGLYCLLEEQLLPGNDATIMKLSSLRDRLNSKRVLVVLDDVCNALVAESFLEGFDWLGPGSLIIITSRDKQVFRLCGINQIYEVQGLNEKEARQLFLLSASIMEDMGEQNLHELSVRVISYANGNPLAISVYGRELKGKKKLSEMETAFLKLKRRPPFKIVDAFKSSYDTLSDNEKNIFLDIACFFQGENVNYVIQLLEGCGFFPHVEIDVLVDKCLVTISENRVWLHKLTQDIGREIINGETVQIERRRRLWEPWSIKYLLEYNEHKANGEPKTTFKRAQGSEEIEGLFLDTSNLRFDLQPSAFKNMLNLRLLKIYCSNPEVHPVINFPTGSLHSLPNELRLLHWENYPLKSLPQNFDPRHLVEINMPYSQLQKLWGGTKNLEMLRTIRLCHSQHLVDIDDLLKAENLEVIDLQGCTRLQNFPAAGRLLRLRVVNLSGCIKIKSVLEIPPNIEKLHLQGTGILALPVSTVKPNHRELVNFLTEIPGLSEASKLERLTSLLESNSSCQDLGKLICLELKDCSCLQSLPNMANLDLNVLDLSGCSSLNSIQGFPRFLKQLYLGGTAIREVPQLPQSLEILNAHGSCLRSLPNMANLEFLKVLDLSGCSELETIQGFPRNLKELYFAGTTLREVPQLPLSLEVLNAHGSDSEKLPMHYKFNNFFDLSQQVVNDFFLKALTYVKHIPRGYTQELINKAPTFSFSAPSHTNQNATFDLQPGSSVMTRLNHSWRNTLVGFGMLVEVAFPEDYCDATDVGISCVCRWSNKEGRSCRIERNFHCWAPGKVVPKVRKDHTFVFSDVNMRPSTGEGNDPDIWAGLVVFEFFPINQQTKCLNDRFTVTRCGVRVINVATGNTSLENISLVLSLDPVEVSGYEVLRVSYDDLQEMDKVLFLYIASLFNDEDVDFVAPLIAGIDLDVSSGLKVLADVSLISVSSNGEIVMHSLQRQMGKEILHGQSMLLSDCESSMTENLSDVPKKEKKHRESKVKKVVSIPAIDEGDLWTWRKYGQKDILGSRFPRGYYRCAYKFTHGCKATKQVQRSETDSNMLAITYLSEHNHPRPTKRKALADSTRSTSSSICSAITTSASSRVFQNKDEPNQPHLPSSSTPPRNAAVLFKMTDMEEFQDNMEVDNDVVDTRTLALFPEFQHQPEEEDPWSTFFDDYNFYF.

The region spanning 5 to 146 is the TIR domain; sequence EKDEEFVCIS…EIVRDVYETH (142 aa). Positions 170 to 421 constitute an NB-ARC domain; sequence IGIRCVGIWG…LLEGCGFFPH (252 aa). 179 to 186 is a binding site for ATP; that stretch reads GMPGIGKT. LRR repeat units lie at residues 498–522, 535–553, 554–575, 577–598, 621–646, 665–688, 742–766, 768–793, and 831–854; these read SEEI…AFKN, NPEV…HSLP, NELR…NFDP, HLVE…TKNL, AENL…RLLR, PPNI…TVKP, LPNM…SIQG, PRFL…SLEI, and PRNL…PLSL. The short motif at 988 to 1005 is the Nuclear localization signal element; it reads RNFHCWAPGKVVPKVRKD. Residues 1204-1272 constitute a DNA-binding region (WRKY); it reads IPAIDEGDLW…YLSEHNHPRP (69 aa). Residues 1300-1321 form a disordered region; sequence RVFQNKDEPNQPHLPSSSTPPR.

Interacts with PopP2, a R.solanacearum type III effector.

The protein localises to the nucleus. Its subcellular location is the cytoplasm. Its function is as follows. Transcription factor. Interacts specifically with the W box (5'-(T)TGAC[CT]-3'), a frequently occurring elicitor-responsive cis-acting element. Also acts as a disease resistance protein involved in resistance to fungal and bacterial pathogens, including R.solanacearum, P.syringae pv. tomato and C.higginsianum. RRS1 mediated resistance depends on salicylic acid and NDR1 (AC O48915). The sequence is that of Disease resistance protein RRS1 from Arabidopsis thaliana (Mouse-ear cress).